The primary structure comprises 302 residues: MSSKDKKLSKPTSGRTGGIRTLSDLNRRSEPDSDSDSDGPQEYFTGGEKSGMLVQDPTKEPKHDDVDEIFNQARQLGAVEGPLEHPSSSRSFTGTGRLLSGESVPTALQQPEPVIHNIIFWSNGFTVDDGPLRKLDDPENASFLDSIRKSECPKELEPVDKRAPVHVNLMRRDEKCPEKEKLKVSFQGVGRTLGGASSSTASSQSNLTDVAAVQSPLQSLVVDETLPSTSIQLRLADGTRMVAKFNNHHTVNDIRGFIEFSRPGNPNNYTLQVMGFPPKPLTDPSQTIEQAGLASSVVIQKF.

2 disordered regions span residues 1 to 64 and 79 to 98; these read MSSK…PKHD and VEGPLEHPSSSRSFTGTGRL. Residues 113-177 form the SEP domain; it reads PVIHNIIFWS…NLMRRDEKCP (65 aa). The UBX domain maps to 224–301; the sequence is ETLPSTSIQL…GLASSVVIQK (78 aa).

Interacts with CDC48A.

This chain is Plant UBX domain-containing protein 3, found in Arabidopsis thaliana (Mouse-ear cress).